The chain runs to 86 residues: BaSO(4)-adsorbing protein 1 (86 aa).

3 cysteine pairs are disulfide-bonded: Cys6–Cys22, Cys18–Cys49, and Cys39–Cys54. The tract at residues 58–86 (GDSASNTQNQGGSRRQENEDQGDDEWDRK) is disordered. A compositionally biased stretch (polar residues) spans 59-70 (DSASNTQNQGGS). Positions 76–86 (EDQGDDEWDRK) are enriched in acidic residues.

In terms of tissue distribution, salivary gland (at protein level).

It is found in the secreted. Functionally, inhibits lectin and classical pathways of complement system activation in the host with no significant effect on the alternative pathway. Inhibits host extrinsic blood coagulation pathway but not the intrinsic cascade. Binds to neutral and negatively charged membranes in vitro; binding is reduced upon pre-incubation with Ca(2+). In Ornithodoros savignyi (African eyed tampan), this protein is BaSO(4)-adsorbing protein 1.